The chain runs to 320 residues: tRNA U34 carboxymethyltransferase (320 aa).

Residues K89, W103, K108, G127, 177 to 178 (LE), M193, Y197, and R312 each bind carboxy-S-adenosyl-L-methionine.

It belongs to the class I-like SAM-binding methyltransferase superfamily. CmoB family. As to quaternary structure, homotetramer.

It carries out the reaction carboxy-S-adenosyl-L-methionine + 5-hydroxyuridine(34) in tRNA = 5-carboxymethoxyuridine(34) in tRNA + S-adenosyl-L-homocysteine + H(+). In terms of biological role, catalyzes carboxymethyl transfer from carboxy-S-adenosyl-L-methionine (Cx-SAM) to 5-hydroxyuridine (ho5U) to form 5-carboxymethoxyuridine (cmo5U) at position 34 in tRNAs. This chain is tRNA U34 carboxymethyltransferase, found in Stutzerimonas stutzeri (strain A1501) (Pseudomonas stutzeri).